Reading from the N-terminus, the 82-residue chain is Delta-conotoxin SVIE (82 aa).

The first 22 residues, 1-22, serve as a signal peptide directing secretion; the sequence is MKLTCVMIVAVLFLTTWTFVTA. Positions 23 to 51 are excised as a propeptide; that stretch reads DDSRYGLKNLFPKARHEMKNPEASKLNKR. 3 cysteine pairs are disulfide-bonded: cysteine 54/cysteine 69, cysteine 61/cysteine 73, and cysteine 68/cysteine 77. Proline 65 carries the post-translational modification 4-hydroxyproline.

Belongs to the conotoxin O1 superfamily. Expressed by the venom duct.

The protein localises to the secreted. In terms of biological role, delta-conotoxins bind to site 6 of voltage-gated sodium channels (Nav) and inhibit the inactivation process. Impairs rapid channel inactivation of Nav1.4/SCN4A (Kd=500 nM). Interacts with a conserved hydrophobic triad (YFV) in the domain-4 voltage sensor of sodium channels. In vivo, injection of both native or synthetic peptide induces twitching of back limbs, running in circles, and spastic paralysis. The protein is Delta-conotoxin SVIE (SO6) of Conus striatus (Striated cone).